A 357-amino-acid chain; its full sequence is Histidinol-phosphate aminotransferase (357 aa).

Lys212 is modified (N6-(pyridoxal phosphate)lysine).

This sequence belongs to the class-II pyridoxal-phosphate-dependent aminotransferase family. Histidinol-phosphate aminotransferase subfamily. Homodimer. Pyridoxal 5'-phosphate is required as a cofactor.

The enzyme catalyses L-histidinol phosphate + 2-oxoglutarate = 3-(imidazol-4-yl)-2-oxopropyl phosphate + L-glutamate. Its pathway is amino-acid biosynthesis; L-histidine biosynthesis; L-histidine from 5-phospho-alpha-D-ribose 1-diphosphate: step 7/9. This Pectobacterium carotovorum subsp. carotovorum (strain PC1) protein is Histidinol-phosphate aminotransferase.